The chain runs to 308 residues: Ribonuclease HIII (308 aa).

Residues 91 to 308 (KNVIGSDEVG…TEKALKMVKK (218 aa)) form the RNase H type-2 domain. Residues Asp97, Glu98, and Asp202 each coordinate a divalent metal cation.

The protein belongs to the RNase HII family. RnhC subfamily. It depends on Mn(2+) as a cofactor. Requires Mg(2+) as cofactor.

It is found in the cytoplasm. It catalyses the reaction Endonucleolytic cleavage to 5'-phosphomonoester.. Functionally, endonuclease that specifically degrades the RNA of RNA-DNA hybrids. The protein is Ribonuclease HIII of Listeria monocytogenes serotype 4b (strain F2365).